The sequence spans 1167 residues: Integrin alpha-E (1167 aa).

An N-terminal signal peptide occupies residues 1–19 (MKWLFHTLLCMASLKPQGA). At 20–1114 (FNLDVDWAWV…IFLKEEETRS (1095 aa)) the chain is on the extracellular side. 2 FG-GAP repeats span residues 27–81 (AWVT…PDEI) and 84–142 (QPVE…LQAQ). An N-linked (GlcNAc...) asparagine glycan is attached at Asn51. Cystine bridges form between Cys72-Cys83 and Cys130-Cys164. The X-domain (extra domain) stretch occupies residues 149–192 (EGFLDPGAHVDSGDYCRSKGGSTGEEKKSARRRRTVEEEDEEED). A disordered region spans residues 163 to 191 (YCRSKGGSTGEEKKSARRRRTVEEEDEEE). Positions 193–382 (GTEIAIVLDG…SKLQQHIVHM (190 aa)) constitute a VWFA domain. Asn256, Asn314, Asn341, Asn364, Asn418, and Asn437 each carry an N-linked (GlcNAc...) asparagine glycan. The FG-GAP 3 repeat unit spans residues 383 to 435 (EGTVGDALQYQLAQTGFSAQILDKGQVLLGTVGAFNWSGGALLYSTQNGRGCF). 4 FG-GAP repeats span residues 438–491 (QTAK…REED), 492–552 (AFVR…DASF), 555–619 (AHTL…GLYD), and 623–683 (QQIR…FTPD). Ca(2+) contacts are provided by Asp514, Asp516, Asp518, Asp522, Asp578, Asn580, Asp582, Asp586, Asp646, Asn648, Asp650, and Asp654. A disulfide bridge links Cys698 with Cys754. Residues Asn718 and Asn773 are each glycosylated (N-linked (GlcNAc...) asparagine). A disulfide bond links Cys814 and Cys820. N-linked (GlcNAc...) asparagine glycans are attached at residues Asn829 and Asn846. Cys884 and Cys898 are joined by a disulfide. Residues Asn911, Asn925, Asn968, and Asn1013 are each glycosylated (N-linked (GlcNAc...) asparagine). Cystine bridges form between Cys998/Cys1023 and Cys1031/Cys1047. Asn1055 and Asn1086 each carry an N-linked (GlcNAc...) asparagine glycan. The chain crosses the membrane as a helical span at residues 1115–1137 (LPLIIGSSIGGLLVLVVIIAILF). At 1138-1167 (KCGFFKRKYQQLNLESTRRAQLKADSLLQD) the chain is on the cytoplasmic side. Residues 1140–1144 (GFFKR) carry the GFFKR motif motif.

Belongs to the integrin alpha chain family. As to quaternary structure, heterodimer of an alpha and a beta subunit. The alpha subunit is composed of a heavy and a light chains linked by a disulfide bond. Alpha-E associates with beta-7.

The protein resides in the membrane. Integrin alpha-E/beta-7 is a receptor for E-cadherin. It mediates adhesion of intra-epithelial T-lymphocytes to epithelial cell monolayers. Mice expressing a null mutation of the alpha-E subunit gene exhibit a marked reduction in the numbers of intraepithelial lymphocytes in the gut and in the development of gut-associated lymphoid aggregates, supporting a specific role for this integrin in mediating retention of lymphocytes in the intestinal wall. In Mus musculus (Mouse), this protein is Integrin alpha-E (Itgae).